The following is a 172-amino-acid chain: Translocon-associated protein subunit delta (172 aa).

The signal sequence occupies residues 1–24 (MAALASLGALALLLLSGLSCCSEA). A disulfide bridge links C25 with C56. At 25–143 (CVEPQITPSY…SVDHRGTWNG (119 aa)) the chain is on the lumenal side. A Glycyl lysine isopeptide (Lys-Gly) (interchain with G-Cter in ubiquitin) cross-link involves residue K72. Residues 144–164 (PWVSTEVLAAAIGLVIYYLAF) traverse the membrane as a helical segment. Residues 165-172 (SAKSHIQA) lie on the Cytoplasmic side of the membrane.

The protein belongs to the TRAP-delta family. Heterotetramer of TRAP-alpha, TRAP-beta, TRAP-delta and TRAP-gamma.

The protein resides in the endoplasmic reticulum membrane. Its function is as follows. TRAP proteins are part of a complex whose function is to bind calcium to the ER membrane and thereby regulate the retention of ER resident proteins. In Bos taurus (Bovine), this protein is Translocon-associated protein subunit delta (SSR4).